The sequence spans 465 residues: Ribulose bisphosphate carboxylase large chain (465 aa).

Residue K4 is modified to N6,N6,N6-trimethyllysine. Substrate is bound by residues N113 and T163. K165 functions as the Proton acceptor in the catalytic mechanism. K167 serves as a coordination point for substrate. Mg(2+) is bound by residues K191, D193, and E194. N6-carboxylysine is present on K191. The Proton acceptor role is filled by H284. Substrate-binding residues include R285, H317, and S369.

It belongs to the RuBisCO large chain family. Type I subfamily. Heterohexadecamer of 8 large chains and 8 small chains; disulfide-linked. The disulfide link is formed within the large subunit homodimers. It depends on Mg(2+) as a cofactor. In terms of processing, the disulfide bond which can form in the large chain dimeric partners within the hexadecamer appears to be associated with oxidative stress and protein turnover.

The protein localises to the plastid. It is found in the chloroplast. It catalyses the reaction 2 (2R)-3-phosphoglycerate + 2 H(+) = D-ribulose 1,5-bisphosphate + CO2 + H2O. The enzyme catalyses D-ribulose 1,5-bisphosphate + O2 = 2-phosphoglycolate + (2R)-3-phosphoglycerate + 2 H(+). Functionally, ruBisCO catalyzes two reactions: the carboxylation of D-ribulose 1,5-bisphosphate, the primary event in carbon dioxide fixation, as well as the oxidative fragmentation of the pentose substrate in the photorespiration process. Both reactions occur simultaneously and in competition at the same active site. In Cyrilla racemiflora (Swamp titi), this protein is Ribulose bisphosphate carboxylase large chain.